The chain runs to 236 residues: Biosynthetic peptidoglycan transglycosylase (236 aa).

The chain crosses the membrane as a helical span at residues 12–31 (ALLWFVAGSIVLVLVFRWVP).

It belongs to the glycosyltransferase 51 family.

It is found in the cell inner membrane. The catalysed reaction is [GlcNAc-(1-&gt;4)-Mur2Ac(oyl-L-Ala-gamma-D-Glu-L-Lys-D-Ala-D-Ala)](n)-di-trans,octa-cis-undecaprenyl diphosphate + beta-D-GlcNAc-(1-&gt;4)-Mur2Ac(oyl-L-Ala-gamma-D-Glu-L-Lys-D-Ala-D-Ala)-di-trans,octa-cis-undecaprenyl diphosphate = [GlcNAc-(1-&gt;4)-Mur2Ac(oyl-L-Ala-gamma-D-Glu-L-Lys-D-Ala-D-Ala)](n+1)-di-trans,octa-cis-undecaprenyl diphosphate + di-trans,octa-cis-undecaprenyl diphosphate + H(+). Its pathway is cell wall biogenesis; peptidoglycan biosynthesis. In terms of biological role, peptidoglycan polymerase that catalyzes glycan chain elongation from lipid-linked precursors. The chain is Biosynthetic peptidoglycan transglycosylase from Pseudomonas putida (strain ATCC 47054 / DSM 6125 / CFBP 8728 / NCIMB 11950 / KT2440).